Here is a 499-residue protein sequence, read N- to C-terminus: Lysine--tRNA ligase (499 aa).

Residues Glu-409 and Glu-416 each coordinate Mg(2+).

Belongs to the class-II aminoacyl-tRNA synthetase family. As to quaternary structure, homodimer. The cofactor is Mg(2+).

Its subcellular location is the cytoplasm. It carries out the reaction tRNA(Lys) + L-lysine + ATP = L-lysyl-tRNA(Lys) + AMP + diphosphate. The polypeptide is Lysine--tRNA ligase (Thioalkalivibrio sulfidiphilus (strain HL-EbGR7)).